We begin with the raw amino-acid sequence, 61 residues long: Photosystem II reaction center protein K (61 aa).

Residues methionine 1–alanine 24 constitute a propeptide that is removed on maturation. Residues isoleucine 32–phenylalanine 52 form a helical membrane-spanning segment.

Belongs to the PsbK family. PSII is composed of 1 copy each of membrane proteins PsbA, PsbB, PsbC, PsbD, PsbE, PsbF, PsbH, PsbI, PsbJ, PsbK, PsbL, PsbM, PsbT, PsbX, PsbY, PsbZ, Psb30/Ycf12, at least 3 peripheral proteins of the oxygen-evolving complex and a large number of cofactors. It forms dimeric complexes.

It is found in the plastid. Its subcellular location is the chloroplast thylakoid membrane. In terms of biological role, one of the components of the core complex of photosystem II (PSII). PSII is a light-driven water:plastoquinone oxidoreductase that uses light energy to abstract electrons from H(2)O, generating O(2) and a proton gradient subsequently used for ATP formation. It consists of a core antenna complex that captures photons, and an electron transfer chain that converts photonic excitation into a charge separation. This Oryza nivara (Indian wild rice) protein is Photosystem II reaction center protein K.